Consider the following 454-residue polypeptide: Probable mitochondrial saccharopine dehydrogenase-like oxidoreductase At5g39410 (454 aa).

M1 is modified (N-acetylmethionine). A disordered region spans residues 215–234 (RRSRPRRPRPTICGPPAKGP).

This sequence belongs to the saccharopine dehydrogenase family.

Its subcellular location is the mitochondrion membrane. The sequence is that of Probable mitochondrial saccharopine dehydrogenase-like oxidoreductase At5g39410 from Arabidopsis thaliana (Mouse-ear cress).